The following is a 229-amino-acid chain: Triosephosphate isomerase (229 aa).

Substrate is bound at residue 9–11 (NYK). Histidine 93 acts as the Electrophile in catalysis. The active-site Proton acceptor is the glutamate 141. Residues isoleucine 146, glycine 180, and 201–202 (AS) each bind substrate.

The protein belongs to the triosephosphate isomerase family. As to quaternary structure, homotetramer; dimer of dimers.

The protein localises to the cytoplasm. The catalysed reaction is D-glyceraldehyde 3-phosphate = dihydroxyacetone phosphate. It participates in carbohydrate biosynthesis; gluconeogenesis. Its pathway is carbohydrate degradation; glycolysis; D-glyceraldehyde 3-phosphate from glycerone phosphate: step 1/1. Its function is as follows. Involved in the gluconeogenesis. Catalyzes stereospecifically the conversion of dihydroxyacetone phosphate (DHAP) to D-glyceraldehyde-3-phosphate (G3P). The polypeptide is Triosephosphate isomerase (Sulfurisphaera tokodaii (strain DSM 16993 / JCM 10545 / NBRC 100140 / 7) (Sulfolobus tokodaii)).